A 102-amino-acid polypeptide reads, in one-letter code: NADH-quinone oxidoreductase subunit K (102 aa).

3 helical membrane passes run 6–26 (MEHG…GLMV), 30–50 (ILFI…AFVV), and 62–82 (VMFI…LAIL).

It belongs to the complex I subunit 4L family. As to quaternary structure, NDH-1 is composed of 13 different subunits. Subunits NuoA, H, J, K, L, M, N constitute the membrane sector of the complex.

Its subcellular location is the cell inner membrane. It carries out the reaction a quinone + NADH + 5 H(+)(in) = a quinol + NAD(+) + 4 H(+)(out). Functionally, NDH-1 shuttles electrons from NADH, via FMN and iron-sulfur (Fe-S) centers, to quinones in the respiratory chain. The immediate electron acceptor for the enzyme in this species is believed to be ubiquinone. Couples the redox reaction to proton translocation (for every two electrons transferred, four hydrogen ions are translocated across the cytoplasmic membrane), and thus conserves the redox energy in a proton gradient. This Ectopseudomonas mendocina (strain ymp) (Pseudomonas mendocina) protein is NADH-quinone oxidoreductase subunit K.